Reading from the N-terminus, the 552-residue chain is Urocanate hydratase (552 aa).

NAD(+)-binding positions include 49–50 (GG), glutamine 127, 173–175 (GMG), aspartate 193, 239–240 (NA), 260–264 (QTSAH), 270–271 (YI), and tyrosine 319. Cysteine 407 is a catalytic residue. Residue glycine 489 coordinates NAD(+).

Belongs to the urocanase family. It depends on NAD(+) as a cofactor.

It is found in the cytoplasm. It catalyses the reaction 4-imidazolone-5-propanoate = trans-urocanate + H2O. The protein operates within amino-acid degradation; L-histidine degradation into L-glutamate; N-formimidoyl-L-glutamate from L-histidine: step 2/3. Functionally, catalyzes the conversion of urocanate to 4-imidazolone-5-propionate. The polypeptide is Urocanate hydratase (Bacillus cereus (strain AH187)).